The chain runs to 76 residues: Neuromacin-like protein (76 aa).

Intrachain disulfides connect C18–C25, C40–C44, C54–C61, and C72–C74.

Belongs to the macin family.

It is found in the secreted. The protein is Neuromacin-like protein of Aplysia californica (California sea hare).